The sequence spans 614 residues: MDKHHHQHLLLQHHQHLHHHQKLSLAKSSRQSCSEWIFRDVPSDITIEVNGGNFALHKFPLVSRSGRIRRIVAEHRDSDISKVELLNLPGGAETFELAAKFCYGINFEITSSNVAQLFCVSDYLEMTEEYSKDNLASRTEEYLESIVCKNLEMCVQVLKQSEILLPLADELNIIGRCIDAIASKACAEQIASSFSRLEYSSSGRLHMSRQVKSSGDGGDWWIEDLSVLRIDLYQRVMNAMKCRGVRPESIGASLVSYAERELTKRSEHEQTIVETIVTLLPVENLVVPISFLFGLLRRAVILDTSVSCRLDLERRLGSQLDMATLDDLLIPSFRHAGDTLFDIDTVHRILVNFSQQGGDDSEDEESVFECDSPHSPSQTAMFKVAKLVDSYLAEIAPDANLDLSKFLLIAEALPPHARTLHDGLYRAIDLYLKAHQGLSDSDKKKLSKLIDFQKLSQEAGAHAAQNERLPLQSIVQVLYFEQLKLRSSLCSSYSDEEPKPKQQQQQSWRINSGALSATMSPKDNYASLRRENRELKLELARLRMRLNDLEKEHICMKRDMQRSHSRKFMSSFSKKMGKLSFFGHSSSRGSSSPSKQSFRTDSKVLMERTCASTD.

The 69-residue stretch at 43–111 folds into the BTB domain; that stretch reads SDITIEVNGG…CYGINFEITS (69 aa). The 266-residue stretch at 219–484 folds into the NPH3 domain; it reads DWWIEDLSVL…VQVLYFEQLK (266 aa). A Phosphotyrosine modification is found at Tyr-425. 2 disordered regions span residues 492 to 525 and 583 to 614; these read SYSDEEPKPKQQQQQSWRINSGALSATMSPKDNY and GHSSSRGSSSPSKQSFRTDSKVLMERTCASTD. Over residues 507-521 the composition is skewed to polar residues; sequence SWRINSGALSATMSP. The stretch at 522–562 forms a coiled coil; that stretch reads KDNYASLRRENRELKLELARLRMRLNDLEKEHICMKRDMQR. Over residues 583–597 the composition is skewed to low complexity; the sequence is GHSSSRGSSSPSKQS.

This sequence belongs to the NPH3 family.

It participates in protein modification; protein ubiquitination. May act as a substrate-specific adapter of an E3 ubiquitin-protein ligase complex (CUL3-RBX1-BTB) which mediates the ubiquitination and subsequent proteasomal degradation of target proteins. The chain is BTB/POZ domain-containing protein At5g48800 from Arabidopsis thaliana (Mouse-ear cress).